A 535-amino-acid polypeptide reads, in one-letter code: Light-independent protochlorophyllide reductase subunit B (535 aa).

[4Fe-4S] cluster is bound at residue Asp36. Asp292 acts as the Proton donor in catalysis. Position 428-429 (Gly428–Leu429) interacts with substrate.

This sequence belongs to the ChlB/BchB/BchZ family. Protochlorophyllide reductase is composed of three subunits; BchL, BchN and BchB. Forms a heterotetramer of two BchB and two BchN subunits. The cofactor is [4Fe-4S] cluster.

It carries out the reaction chlorophyllide a + oxidized 2[4Fe-4S]-[ferredoxin] + 2 ADP + 2 phosphate = protochlorophyllide a + reduced 2[4Fe-4S]-[ferredoxin] + 2 ATP + 2 H2O. It functions in the pathway porphyrin-containing compound metabolism; bacteriochlorophyll biosynthesis (light-independent). Component of the dark-operative protochlorophyllide reductase (DPOR) that uses Mg-ATP and reduced ferredoxin to reduce ring D of protochlorophyllide (Pchlide) to form chlorophyllide a (Chlide). This reaction is light-independent. The NB-protein (BchN-BchB) is the catalytic component of the complex. This Chlorobaculum parvum (strain DSM 263 / NCIMB 8327) (Chlorobium vibrioforme subsp. thiosulfatophilum) protein is Light-independent protochlorophyllide reductase subunit B.